The primary structure comprises 405 residues: Acetate kinase (405 aa).

Residue Asn-13 coordinates Mg(2+). Position 20 (Lys-20) interacts with ATP. Arg-94 provides a ligand contact to substrate. The Proton donor/acceptor role is filled by Asp-153. ATP-binding positions include 213 to 217, 288 to 290, and 336 to 340; these read HLGNG, DFR, and GIGEN. Residue Glu-390 coordinates Mg(2+).

The protein belongs to the acetokinase family. Homodimer. Mg(2+) serves as cofactor. The cofactor is Mn(2+).

The protein resides in the cytoplasm. The enzyme catalyses acetate + ATP = acetyl phosphate + ADP. Its pathway is metabolic intermediate biosynthesis; acetyl-CoA biosynthesis; acetyl-CoA from acetate: step 1/2. Its function is as follows. Catalyzes the formation of acetyl phosphate from acetate and ATP. Can also catalyze the reverse reaction. The sequence is that of Acetate kinase from Buchnera aphidicola subsp. Acyrthosiphon pisum (strain APS) (Acyrthosiphon pisum symbiotic bacterium).